A 144-amino-acid polypeptide reads, in one-letter code: Large ribosomal subunit protein uL14 (144 aa).

This sequence belongs to the universal ribosomal protein uL14 family. Part of the 50S ribosomal subunit. Forms a cluster with proteins L3 and L24e, part of which may contact the 16S rRNA in 2 intersubunit bridges.

In terms of biological role, binds to 23S rRNA. Forms part of two intersubunit bridges in the 70S ribosome. The polypeptide is Large ribosomal subunit protein uL14 (Cenarchaeum symbiosum (strain A)).